Reading from the N-terminus, the 584-residue chain is Keratin, type I cytoskeletal 10 (584 aa).

Over residues 1 to 15 (MSVRYSSSKHYSSSR) the composition is skewed to low complexity. A disordered region spans residues 1–24 (MSVRYSSSKHYSSSRSGGGGGGGG). Residues 1-145 (MSVRYSSSKH…GGDGGLLSGN (145 aa)) are head. A phosphoserine mark is found at S14, S16, S42, S53, S56, and S170. Positions 146–181 (EKVTMQNLNDRLASYLDKVRALEESNYELEGKIKEW) are coil 1A. An IF rod domain is found at 146-460 (EKVTMQNLND…SLLEGEGSSG (315 aa)). The interval 182-202 (YEKHGNSHQGEPRDYSKYYKT) is linker 1. The coil 1B stretch occupies residues 203-294 (IDDLKNQILN…KNHEEEMKDL (92 aa)). The tract at residues 295 to 317 (RNVSTGDVNVEMNAAPGVDLTQL) is linker 12. The coil 2 stretch occupies residues 318–456 (LNNMRSQYEQ…QTYRSLLEGE (139 aa)). Residues 453–584 (LEGEGSSGGG…GESSSKGPRY (132 aa)) form a disordered region. The segment covering 457-563 (GSSGGGGRGG…GGGYGGGSSS (107 aa)) has biased composition (gly residues). Residues 457-584 (GSSGGGGRGG…GESSSKGPRY (128 aa)) are tail. Positions 564-584 (GGHKSSSSGSVGESSSKGPRY) are enriched in low complexity.

This sequence belongs to the intermediate filament family. As to quaternary structure, heterotetramer of two type I and two type II keratins. Heterodimer with KRT1. Two heterodimers of KRT1 and KRT10 form a heterotetramer. The KRT10 subunit in the heterotetramer is probably disulfide-linked. Interacts with PLEC isoform 1C, when in a heterodimer with KRT1. In terms of assembly, (Microbial infection) Interacts (via C-terminal tail domain) with the S.aureus clumping factor, clfB; this interaction probably mediates S.aureus attachment to the keratinized squamous epithelial cells from the nasal cavity. (Microbial infection) Interacts (via the C-terminal tail domain) with S.pneumoniae serine-rich repeat protein PsrP; this interaction probably mediates S.pneumoniae adherence to lung tissue and subsequent pathogenesis. Neither protein has to be glycosylated for the interaction to occur. As to expression, seen in all suprabasal cell layers including stratum corneum. Expressed on the surface of lung cell lines. Localized on the surface of desquamated nasal epithelial cells (at protein level).

Its subcellular location is the secreted. The protein resides in the extracellular space. It is found in the cell surface. The protein localises to the cytoplasm. Plays a role in the establishment of the epidermal barrier on plantar skin. Involved in the maintenance of cell layer development and keratin filament bundles in suprabasal cells of the epithelium. In terms of biological role, (Microbial infection) Acts as a mediator of S.aureus adherence to desquamated nasal epithelial cells via clfB, and hence may play a role in nasal colonization. Functionally, (Microbial infection) Binds S.pneumoniae PsrP, mediating adherence of the bacteria to lung cell lines. Reduction of levels of KRT10 keratin decrease adherence, overexpression increases adherence. Neither protein has to be glycosylated for the interaction to occur. This is Keratin, type I cytoskeletal 10 (KRT10) from Homo sapiens (Human).